Here is a 314-residue protein sequence, read N- to C-terminus: Cytochrome f (314 aa).

An N-terminal signal peptide occupies residues 1 to 30 (MATNKFFKSLLFALTIAINSFGFCIQDAVA). Residues Y31, C51, C54, and H55 each coordinate heme. The chain crosses the membrane as a helical span at residues 280-300 (IYGYLAFCFSVLITQIMLVLK).

The protein belongs to the cytochrome f family. The 4 large subunits of the cytochrome b6-f complex are cytochrome b6, subunit IV (17 kDa polypeptide, petD), cytochrome f and the Rieske protein, while the 4 small subunits are PetG, PetL, PetM and PetN. The complex functions as a dimer. Heme is required as a cofactor.

It localises to the plastid. The protein localises to the chloroplast thylakoid membrane. Functionally, component of the cytochrome b6-f complex, which mediates electron transfer between photosystem II (PSII) and photosystem I (PSI), cyclic electron flow around PSI, and state transitions. The protein is Cytochrome f of Phaeodactylum tricornutum (strain CCAP 1055/1).